Reading from the N-terminus, the 341-residue chain is Putative UPF0607 protein ENSP00000383144 (341 aa).

Disordered regions lie at residues 70–131 and 218–279; these read RLPK…NPRP and LMVG…PPAK. The span at 72–101 shows a compositional bias: basic and acidic residues; the sequence is PKTEVRAEEPKEATEVKDQVETQEQEDNKR. A compositionally biased stretch (polar residues) spans 108–127; the sequence is EAASTSRPLETQGNLTSSWY. A compositionally biased stretch (basic residues) spans 243–252; the sequence is AGHRSHKRKL.

It belongs to the UPF0607 family.

The chain is Putative UPF0607 protein ENSP00000383144 from Homo sapiens (Human).